A 75-amino-acid chain; its full sequence is Cruzioseptin-8 (75 aa).

An N-terminal signal peptide occupies residues 1–22; sequence MAFLKKCLFLVLFLGLVSLSIC. A propeptide spanning residues 23–43 is cleaved from the precursor; it reads EEEKREEENEEVQEDDDQSEE. The tract at residues 25-44 is disordered; that stretch reads EKREEENEEVQEDDDQSEEK. The span at 30–41 shows a compositional bias: acidic residues; that stretch reads ENEEVQEDDDQS. Residue Q72 is modified to Glutamine amide. A propeptide spanning residues 74 to 75 is cleaved from the precursor; the sequence is EQ.

As to expression, expressed by the skin glands.

The protein resides in the secreted. Has antimicrobial activity. The polypeptide is Cruzioseptin-8 (Cruziohyla calcarifer (Splendid leaf frog)).